A 261-amino-acid chain; its full sequence is ATP synthase subunit a (261 aa).

Helical transmembrane passes span 45 to 65 (ITNV…ILVL), 107 to 127 (VMTL…PLSF), 133 to 153 (MAVT…LGFM), 162 to 182 (MFWV…IEVI), 209 to 229 (IAGF…VTAI), and 232 to 252 (LELL…CVYL).

This sequence belongs to the ATPase A chain family. In terms of assembly, F-type ATPases have 2 components, CF(1) - the catalytic core - and CF(0) - the membrane proton channel. CF(1) has five subunits: alpha(3), beta(3), gamma(1), delta(1), epsilon(1). CF(0) has four main subunits: a, b, b' and c.

The protein resides in the cell inner membrane. Its function is as follows. Key component of the proton channel; it plays a direct role in the translocation of protons across the membrane. The polypeptide is ATP synthase subunit a (Cereibacter sphaeroides (strain ATCC 17029 / ATH 2.4.9) (Rhodobacter sphaeroides)).